Consider the following 308-residue polypeptide: UDP-N-acetylenolpyruvoylglucosamine reductase (308 aa).

The FAD-binding PCMH-type domain maps to 22 to 185; it reads RVGGPADWLF…TEATFRAEAG (164 aa). Residue R165 is part of the active site. Positions 197-211 are enriched in basic and acidic residues; the sequence is QIARRDSSQPTKERS. The tract at residues 197–228 is disordered; it reads QIARRDSSQPTKERSAGSTFRNPAGFSSTGRA. The span at 212-226 shows a compositional bias: polar residues; it reads AGSTFRNPAGFSSTG. S214 acts as the Proton donor in catalysis. The active site involves E296.

This sequence belongs to the MurB family. FAD serves as cofactor.

Its subcellular location is the cytoplasm. It catalyses the reaction UDP-N-acetyl-alpha-D-muramate + NADP(+) = UDP-N-acetyl-3-O-(1-carboxyvinyl)-alpha-D-glucosamine + NADPH + H(+). It participates in cell wall biogenesis; peptidoglycan biosynthesis. Functionally, cell wall formation. This is UDP-N-acetylenolpyruvoylglucosamine reductase from Cereibacter sphaeroides (strain ATCC 17023 / DSM 158 / JCM 6121 / CCUG 31486 / LMG 2827 / NBRC 12203 / NCIMB 8253 / ATH 2.4.1.) (Rhodobacter sphaeroides).